The following is a 110-amino-acid chain: Hydrogenase maturation factor HypA (110 aa).

His-2 serves as a coordination point for Ni(2+). Cys-73, Cys-76, Cys-87, and Cys-89 together coordinate Zn(2+).

The protein belongs to the HypA/HybF family.

Functionally, involved in the maturation of [NiFe] hydrogenases. Required for nickel insertion into the metal center of the hydrogenase. The chain is Hydrogenase maturation factor HypA from Archaeoglobus fulgidus (strain ATCC 49558 / DSM 4304 / JCM 9628 / NBRC 100126 / VC-16).